An 81-amino-acid chain; its full sequence is MSVLETIKVIWENISGYLQWIVPSLVILIIVVILASMKRGMTNFVLNIREIFSSKWWAFIFFILLFLFAIFWNDFRESIGM.

This is an uncharacterized protein from Mycoplasma (Bacteriophage L2).